Consider the following 317-residue polypeptide: Ribosomal protein L11 methyltransferase (317 aa).

Residues Thr158, Gly179, Asp201, and Asn244 each coordinate S-adenosyl-L-methionine.

It belongs to the methyltransferase superfamily. PrmA family.

The protein localises to the cytoplasm. It catalyses the reaction L-lysyl-[protein] + 3 S-adenosyl-L-methionine = N(6),N(6),N(6)-trimethyl-L-lysyl-[protein] + 3 S-adenosyl-L-homocysteine + 3 H(+). Its function is as follows. Methylates ribosomal protein L11. This is Ribosomal protein L11 methyltransferase from Streptococcus pyogenes serotype M18 (strain MGAS8232).